Reading from the N-terminus, the 448-residue chain is Packaging protein 1 (448 aa).

The segment at 1–76 (METKGRRSAA…SQPAKRGGLL (76 aa)) is disordered. Basic residues predominate over residues 22 to 31 (PRKRPTRRAP). The segment covering 56–67 (RPSSDSLLQEPS) has biased composition (polar residues). Residue 171–178 (GPTGCGKS) participates in ATP binding. A DNA-binding region spans residues 440–448 (RAYRARKIK).

This sequence belongs to the adenoviridae packaging protein 1 family. In terms of assembly, homodimer. Part of a genome packaging complex composed of packaging proteins 1, 2 and 3; this complex specifically binds to the packaging sequence on the left end of viral genomic DNA and performs packaging of the viral genome. Interacts with protein 33K.

It localises to the virion. The protein localises to the host nucleus. The protein resides in the host nucleoplasm. Its subcellular location is the host nucleolus. Component of the packaging machinery which encapsidates the viral DNA into preformed capsids and transcriptional activator of the viral major late promoter (MLP). Binds, along with packaging proteins 2 and 3, to the specific packaging sequence on the left end of viral genomic DNA and displays ATPase activity thereby providing the power stroke of the packaging machinery. The activity of packaging protein IVa2 is stimulated by protein 33K which acts as a terminase. May be the protein that pumps DNA into the capsid powered by ATP hydrolysis. Specifically binds to the 5'-CG-3' nucleotides of the repeats making up the packaging sequence. Component of the DEF-A and DEF-B transcription factors that bind downstream elements of the major late promoter (MLP), and stimulate transcription from the MLP after initiation of viral DNA replication. DEF-A is a heterodimer packaging proteins 1 and 2 and DEF-B is a homodimer of packaging protein 1. This Human adenovirus B serotype 7 (HAdV-7) protein is Packaging protein 1.